Consider the following 146-residue polypeptide: D-aminoacyl-tRNA deacylase (146 aa).

Positions 137-138 match the Gly-cisPro motif, important for rejection of L-amino acids motif; that stretch reads GP.

It belongs to the DTD family. Homodimer.

It is found in the cytoplasm. The catalysed reaction is glycyl-tRNA(Ala) + H2O = tRNA(Ala) + glycine + H(+). It catalyses the reaction a D-aminoacyl-tRNA + H2O = a tRNA + a D-alpha-amino acid + H(+). Its function is as follows. An aminoacyl-tRNA editing enzyme that deacylates mischarged D-aminoacyl-tRNAs. Also deacylates mischarged glycyl-tRNA(Ala), protecting cells against glycine mischarging by AlaRS. Acts via tRNA-based rather than protein-based catalysis; rejects L-amino acids rather than detecting D-amino acids in the active site. By recycling D-aminoacyl-tRNA to D-amino acids and free tRNA molecules, this enzyme counteracts the toxicity associated with the formation of D-aminoacyl-tRNA entities in vivo and helps enforce protein L-homochirality. This is D-aminoacyl-tRNA deacylase from Anoxybacillus flavithermus (strain DSM 21510 / WK1).